Reading from the N-terminus, the 89-residue chain is Protein S100-A8 (89 aa).

EF-hand domains are found at residues 13-48 and 46-81; these read IDVY…FVQN and VQNI…VGVA. Zn(2+)-binding residues include histidine 17 and histidine 27. A Ca(2+)-binding site is contributed by aspartate 33. Position 42 is an S-nitrosocysteine (cysteine 42). Ca(2+) contacts are provided by aspartate 59, asparagine 61, aspartate 63, and glutamate 70. A Zn(2+)-binding site is contributed by histidine 83.

It belongs to the S-100 family. As to quaternary structure, homodimer. Preferentially exists as a heterodimer or heterotetramer with S100A9 known as calprotectin (S100A8/A9). Calprotectin (S100A8/9) interacts with CEACAM3 and tubulin filaments in a calcium-dependent manner. Heterotetrameric calprotectin (S100A8/A9) interacts with ANXA6 and associates with tubulin filaments in activated monocytes. S100A8 and calprotectin (S100A8/9) interact with NCF2/P67PHOX, RAC1 and RAC2. Calprotectin (S100A8/9) interacts with CYBA and CYBB. S100A8 interacts with AGER, ATP2A2 and with the heterodimeric complex formed by TLR4 and LY96. Calprotectin (S100A8/9) interacts with NOS2 to form the iNOS-S100A8/A9 transnitrosylase complex. Calprotectin (S100A8/9) interacts with CD69.

Its subcellular location is the secreted. The protein resides in the cytoplasm. It is found in the cytoskeleton. The protein localises to the cell membrane. Calprotectin (S100A8/A9) activity on TLR4 signaling is inhibited by paquinimod. In terms of biological role, S100A8 is a calcium- and zinc-binding protein which plays a prominent role in the regulation of inflammatory processes and immune response. It can induce neutrophil chemotaxis and adhesion. Predominantly found as calprotectin (S100A8/A9) which has a wide plethora of intra- and extracellular functions. The intracellular functions include: facilitating leukocyte arachidonic acid trafficking and metabolism, modulation of the tubulin-dependent cytoskeleton during migration of phagocytes and activation of the neutrophilic NADPH-oxidase. Also participates in regulatory T-cell differentiation together with CD69. Activates NADPH-oxidase by facilitating the enzyme complex assembly at the cell membrane, transferring arachidonic acid, an essential cofactor, to the enzyme complex and S100A8 contributes to the enzyme assembly by directly binding to NCF2/P67PHOX. The extracellular functions involve pro-inflammatory, antimicrobial, oxidant-scavenging and apoptosis-inducing activities. Its pro-inflammatory activity includes recruitment of leukocytes, promotion of cytokine and chemokine production, and regulation of leukocyte adhesion and migration. Acts as an alarmin or a danger associated molecular pattern (DAMP) molecule and stimulates innate immune cells via binding to pattern recognition receptors such as Toll-like receptor 4 (TLR4) and receptor for advanced glycation endproducts (AGER). Binding to TLR4 and AGER activates the MAP-kinase and NF-kappa-B signaling pathways resulting in the amplification of the pro-inflammatory cascade. Has antimicrobial activity towards bacteria and fungi and exerts its antimicrobial activity probably via chelation of Zn(2+) which is essential for microbial growth. Can induce cell death via autophagy and apoptosis and this occurs through the cross-talk of mitochondria and lysosomes via reactive oxygen species (ROS) and the process involves BNIP3. Can regulate neutrophil number and apoptosis by an anti-apoptotic effect; regulates cell survival via ITGAM/ITGB and TLR4 and a signaling mechanism involving MEK-ERK. Its role as an oxidant scavenger has a protective role in preventing exaggerated tissue damage by scavenging oxidants. The iNOS-S100A8/A9 transnitrosylase complex is proposed to direct selective inflammatory stimulus-dependent S-nitrosylation of multiple targets such as GAPDH, ANXA5, EZR, MSN and VIM by recognizing a [IL]-x-C-x-x-[DE] motif; S100A8 seems to contribute to S-nitrosylation site selectivity. Its function is as follows. (Microbial infection) Upon infection by murine coronavirus (MHV-A59), induces expansion of aberrant immature neutrophils in a TLR4-dependent manner. This is Protein S100-A8 from Mus musculus (Mouse).